Reading from the N-terminus, the 453-residue chain is Bifunctional protein GlmU (453 aa).

The pyrophosphorylase stretch occupies residues 1–226 (MKFSAVILAA…AIEVEGVNDR (226 aa)). Residues 8–11 (LAAG), Lys22, Gln73, 78–79 (GT), 100–102 (YGD), Gly137, Glu151, Asn166, and Asn224 contribute to the UDP-N-acetyl-alpha-D-glucosamine site. Asp102 serves as a coordination point for Mg(2+). Asn224 contacts Mg(2+). Residues 227-247 (AQLARLERAFQSMQAQKLLEQ) form a linker region. The segment at 248–453 (GVMLRDPARF…TGWQRPVKQK (206 aa)) is N-acetyltransferase. Residues Arg330 and Lys348 each contribute to the UDP-N-acetyl-alpha-D-glucosamine site. His360 functions as the Proton acceptor in the catalytic mechanism. UDP-N-acetyl-alpha-D-glucosamine is bound by residues Tyr363 and Asn374. Acetyl-CoA contacts are provided by residues Ala377, 383–384 (NY), Ser402, Ala420, and Arg437.

It in the N-terminal section; belongs to the N-acetylglucosamine-1-phosphate uridyltransferase family. This sequence in the C-terminal section; belongs to the transferase hexapeptide repeat family. Homotrimer. Mg(2+) serves as cofactor.

It localises to the cytoplasm. The catalysed reaction is alpha-D-glucosamine 1-phosphate + acetyl-CoA = N-acetyl-alpha-D-glucosamine 1-phosphate + CoA + H(+). It catalyses the reaction N-acetyl-alpha-D-glucosamine 1-phosphate + UTP + H(+) = UDP-N-acetyl-alpha-D-glucosamine + diphosphate. The protein operates within nucleotide-sugar biosynthesis; UDP-N-acetyl-alpha-D-glucosamine biosynthesis; N-acetyl-alpha-D-glucosamine 1-phosphate from alpha-D-glucosamine 6-phosphate (route II): step 2/2. It functions in the pathway nucleotide-sugar biosynthesis; UDP-N-acetyl-alpha-D-glucosamine biosynthesis; UDP-N-acetyl-alpha-D-glucosamine from N-acetyl-alpha-D-glucosamine 1-phosphate: step 1/1. It participates in bacterial outer membrane biogenesis; LPS lipid A biosynthesis. Catalyzes the last two sequential reactions in the de novo biosynthetic pathway for UDP-N-acetylglucosamine (UDP-GlcNAc). The C-terminal domain catalyzes the transfer of acetyl group from acetyl coenzyme A to glucosamine-1-phosphate (GlcN-1-P) to produce N-acetylglucosamine-1-phosphate (GlcNAc-1-P), which is converted into UDP-GlcNAc by the transfer of uridine 5-monophosphate (from uridine 5-triphosphate), a reaction catalyzed by the N-terminal domain. This chain is Bifunctional protein GlmU, found in Vibrio campbellii (strain ATCC BAA-1116).